The primary structure comprises 596 residues: MGKIQELSPELINQIAAGEVIESAHSVVKELMENSMDAGATQMDIESKDGGLSLLRITDNGSGIDPEDIEPALKRHATSKIRDYGDLENVLSYGFRGEALASIASVSRLTLESGIKNQKTAWKICSIGGKISEKEEIPGFVGTKILVEELFFNTPVRRKFLKSVRSEDKKIRDRVTTQALARHDVRFRLFQDGKEVFVLPSRENKKDRIVDLFGENFRDHLLEVSLERGGLNATGYISDPDFYKSNRTGQFVFVNGRPVEIKYGSTLLKKAYDELLPPNGHPYCFLFFEIDPSRVDVNVHPAKKEIRFLDEEGFNGFFLTLIQKELRSSTPVSFLELKKRLLRPTPETFKTSSLYQAHSSSRSGESPLLSRELFTEVPRQEGFDLDRMGPGASLSALTDNVVKHSSFVPKKHFGVLFETFILAEAEDGFCIIDQHTAHERIRYEEVLRKLEKKNYGIQPLLTPIRIDVSKQEQEDILNRKKEYEEVGIFLDPLGEDSVVLREIPAYMEPGEEKEIILDFLNRTEGKETTEPELYDLMAKCVACRSAIKKGDHLSDPILAEILNRLSYCENPSRCPHGRPTLVKLSRDDLERMFHRK.

The protein belongs to the DNA mismatch repair MutL/HexB family.

Functionally, this protein is involved in the repair of mismatches in DNA. It is required for dam-dependent methyl-directed DNA mismatch repair. May act as a 'molecular matchmaker', a protein that promotes the formation of a stable complex between two or more DNA-binding proteins in an ATP-dependent manner without itself being part of a final effector complex. The polypeptide is DNA mismatch repair protein MutL (Leptospira borgpetersenii serovar Hardjo-bovis (strain JB197)).